Consider the following 53-residue polypeptide: ATP synthase protein 8 (53 aa).

The chain crosses the membrane as a helical span at residues 5-25; that stretch reads APISWLTLFFVFSITLVIFNI.

It belongs to the ATPase protein 8 family. As to quaternary structure, F-type ATPases have 2 components, CF(1) - the catalytic core - and CF(0) - the membrane proton channel.

Its subcellular location is the mitochondrion membrane. Its function is as follows. Mitochondrial membrane ATP synthase (F(1)F(O) ATP synthase or Complex V) produces ATP from ADP in the presence of a proton gradient across the membrane which is generated by electron transport complexes of the respiratory chain. F-type ATPases consist of two structural domains, F(1) - containing the extramembraneous catalytic core and F(0) - containing the membrane proton channel, linked together by a central stalk and a peripheral stalk. During catalysis, ATP synthesis in the catalytic domain of F(1) is coupled via a rotary mechanism of the central stalk subunits to proton translocation. Part of the complex F(0) domain. Minor subunit located with subunit a in the membrane. In Aedes aegypti (Yellowfever mosquito), this protein is ATP synthase protein 8.